A 425-amino-acid polypeptide reads, in one-letter code: Enolase (425 aa).

A (2R)-2-phosphoglycerate-binding site is contributed by Q163. Residue E205 is the Proton donor of the active site. 3 residues coordinate Mg(2+): D242, E285, and D312. The (2R)-2-phosphoglycerate site is built by K337, R366, S367, and K388. K337 functions as the Proton acceptor in the catalytic mechanism.

Belongs to the enolase family. The cofactor is Mg(2+).

The protein resides in the cytoplasm. It is found in the secreted. The protein localises to the cell surface. It catalyses the reaction (2R)-2-phosphoglycerate = phosphoenolpyruvate + H2O. Its pathway is carbohydrate degradation; glycolysis; pyruvate from D-glyceraldehyde 3-phosphate: step 4/5. In terms of biological role, catalyzes the reversible conversion of 2-phosphoglycerate (2-PG) into phosphoenolpyruvate (PEP). It is essential for the degradation of carbohydrates via glycolysis. This is Enolase from Syntrophomonas wolfei subsp. wolfei (strain DSM 2245B / Goettingen).